A 211-amino-acid chain; its full sequence is Endonuclease Htp3 (211 aa).

Residues 1–20 form the signal peptide; sequence MLEVPVWIPILAFAVGLGLG. The short motif at 48–51 is the RxLR element; it reads RTLR. The region spanning 48 to 198 is the TNase-like domain; the sequence is RTLRGKVVSV…REKRVNIWSL (151 aa). D77 provides a ligand contact to Ca(2+). R90 is an active-site residue. Residue D95 coordinates Ca(2+). Active-site residues include E98 and R138. N153 carries an N-linked (GlcNAc...) asparagine glycan. The tract at residues 200–211 is binding to the host cell surface; sequence KRETPAQYKARK.

In the N-terminal section; belongs to the RxLR effector family. This sequence in the C-terminal section; belongs to the LCL3 family. In terms of assembly, interacts with the host cell surface endoplasmin gp96, in order to get translocated into to host cell. Interacts with the effector Htp1, in order to get released from vesicles into the host cytosol.

The protein resides in the secreted. It is found in the host cytoplasm. The protein localises to the host cytosol. The nuclease activity shows a general salt dependency with a clear reduction by magnesium and sulfate ions. Effector involved in the disease saprolegniosis in salmonids and other freshwater fish, resulting in considerable economic losses in aquaculture. Within the host fish cells, Htp3 is released from vesicles into host cytosol where it degrades nucleic acids. This Saprolegnia parasitica (strain CBS 223.65) protein is Endonuclease Htp3 (HTP3).